Reading from the N-terminus, the 211-residue chain is Ras-related protein Rab-38 (211 aa).

GTP is bound by residues Gly19, Val20, Gly21, Lys22, Thr23, Ser24, Ser35, Ser36, Tyr38, and Thr41. Residue Thr23 coordinates Mg(2+). Positions 32–46 (QNFSSHYRATIGVDF) match the Switch 1 motif. Mg(2+)-binding residues include Thr41 and Asp65. Gly68, Lys128, Asp130, Ala160, and Lys161 together coordinate GTP. Positions 68–81 (GQERFGNMTRVYYR) match the Switch 2 motif. Residue Cys205 is the site of S-palmitoyl cysteine attachment. A lipid anchor (S-geranylgeranyl cysteine) is attached at Cys208.

Belongs to the small GTPase superfamily. Rab family. As to quaternary structure, interacts with ANKRD27. The cofactor is Mg(2+). In terms of processing, although at least one in vitro system can process and methylate the prenylated C-terminal, in an in vitro system that normally express Rab-38 and in vivo the prenylated C-terminal is not proteolytically processed and not methylated. In terms of tissue distribution, expressed in melanocytes.

It is found in the cell membrane. The protein localises to the melanosome. Its subcellular location is the cytoplasmic vesicle. It localises to the phagosome. The protein resides in the phagosome membrane. It is found in the melanosome membrane. The enzyme catalyses GTP + H2O = GDP + phosphate + H(+). Its activity is regulated as follows. Regulated by guanine nucleotide exchange factors (GEFs) including the BLOC-3 complex composed of HPS1 and HPS4 which promote the exchange of bound GDP for free GTP. Regulated by GTPase activating proteins (GAPs) including SGSM2 which increase the GTP hydrolysis activity. Inhibited by GDP dissociation inhibitors (GDIs). Its function is as follows. The small GTPases Rab are key regulators of intracellular membrane trafficking, from the formation of transport vesicles to their fusion with membranes. Rabs cycle between an inactive GDP-bound form and an active GTP-bound form that is able to recruit to membranes different sets of downstream effectors directly responsible for vesicle formation, movement, tethering and fusion. RAB38 may be involved in melanosomal transport and docking. Involved in the proper sorting of TYRP1. Involved in peripheral melanosomal distribution of TYRP1 in melanocytes; the function, which probably is implicating vesicle-trafficking, includes cooperation with ANKRD27 and VAMP7. Plays a role in the maturation of phagosomes that engulf pathogens, such as S.aureus and M.tuberculosis. Plays an important role in the control of melanin production and melanosome biogenesis. In concert with RAB32, regulates the proper trafficking of melanogenic enzymes TYR, TYRP1 and DCT/TYRP2 to melanosomes in melanocytes. The chain is Ras-related protein Rab-38 from Homo sapiens (Human).